Consider the following 59-residue polypeptide: Large ribosomal subunit protein bL33 (59 aa).

It belongs to the bacterial ribosomal protein bL33 family.

The sequence is that of Large ribosomal subunit protein bL33 from Prosthecochloris aestuarii (strain DSM 271 / SK 413).